Consider the following 207-residue polypeptide: Outer-membrane lipoprotein LolB (207 aa).

The N-terminal stretch at 1-21 (MPQPDFRLIRLLPLAALVLTA) is a signal peptide. Cys-22 carries the N-palmitoyl cysteine lipid modification. A lipid anchor (S-diacylglycerol cysteine) is attached at Cys-22.

Belongs to the LolB family. Monomer.

It localises to the cell outer membrane. Plays a critical role in the incorporation of lipoproteins in the outer membrane after they are released by the LolA protein. This Shigella sonnei (strain Ss046) protein is Outer-membrane lipoprotein LolB.